Reading from the N-terminus, the 1544-residue chain is Lysine-specific demethylase 5B (1544 aa).

Pro residues predominate over residues 1-14; it reads MEPATTLPPGPRPA. The disordered stretch occupies residues 1 to 22; sequence MEPATTLPPGPRPALPLGGPGP. Positions 32–73 constitute a JmjN domain; it reads CPVFEPSWEEFADPFAFIHKIRPIAEQTGICKVRPPPDWQPP. The 91-residue stretch at 97–187 folds into the ARID domain; the sequence is TRVKLNFLDQ…ILNPYNLFLS (91 aa). Residues K148, K204, K209, K242, K274, and K278 each participate in a glycyl lysine isopeptide (Lys-Gly) (interchain with G-Cter in SUMO2) cross-link. Positions 200–228 are disordered; it reads TSDTKDKEYKPHDIPQRQSVQPAETCPPA. A compositionally biased stretch (basic and acidic residues) spans 202–214; the sequence is DTKDKEYKPHDIP. The interval 269-297 is disordered; the sequence is NEKEMKSTIKQEPTEKKDCELESEKEKPK. The segment at 309–359 adopts a PHD-type 1 zinc-finger fold; sequence LYVCLLCGSGNDEDRLLLCDGCDDSYHTFCLVPPLHDVPKGDWRCPKCLAQ. Y425 contacts 2-oxoglutarate. The region spanning 453–619 is the JmjC domain; the sequence is EYLDSGWNLN…LGRQCVEHYR (167 aa). Fe cation-binding residues include H499 and E501. Positions 507, 509, and 517 each coordinate 2-oxoglutarate. A Fe cation-binding site is contributed by H587. The C5HC2 zinc finger occupies 692–744; it reads CIKCKTTCFMSAISCSCKPGLLVCLHHVKELCSCPPYKYNLRYRYTLDDLYPM. K769 is covalently cross-linked (Glycyl lysine isopeptide (Lys-Gly) (interchain with G-Cter in SUMO2)). Residue K832 is modified to N6-acetyllysine. S986 is modified (phosphoserine). Residues 1176-1224 form a PHD-type 2 zinc finger; that stretch reads MKVCLCQKTPATPMIQCELCRDAFHTSCVAAPSISQSSRIWLCPHCRRS. Polar residues predominate over residues 1297–1314; the sequence is QASATDKVSQPPGTTSFS. The segment at 1297–1318 is disordered; it reads QASATDKVSQPPGTTSFSLPDD. At S1328 the chain carries Phosphoserine. Over residues 1374-1388 the composition is skewed to polar residues; it reads PSSVQQADRSSPVRS. Positions 1374 to 1447 are disordered; it reads PSSVQQADRS…IKLSHPKDMD (74 aa). Basic and acidic residues predominate over residues 1389-1427; sequence SSEKNDCLRGKRDAINSPERKLKRRPEREGLPSERWDRV. Positions 1428–1441 are enriched in basic residues; the sequence is KHMRTPQKKKIKLS. K1450 participates in a covalent cross-link: Glycyl lysine isopeptide (Lys-Gly) (interchain with G-Cter in SUMO2). S1456 carries the post-translational modification Phosphoserine. A PHD-type 3 zinc finger spans residues 1484-1538; it reads DAICPAVSCLQPEGDEVDWVQCDGSCNQWFHQVCVGVSPEMAEKEDYICVRCTGK.

Belongs to the JARID1 histone demethylase family. In terms of assembly, interacts with FOXG1B, PAX9, MYC, MYCN and RB1. Interacts with HDAC1, HDAC4, HDAC5 and HDAC7. Interacts (via PHD-type 1 zinc finger) with histone H3 unmodified at 'Lys-4'; the interaction is inhibited when histone H3 is methylated at 'Arg-2' or 'Lys-4'. Fe(2+) serves as cofactor. In terms of tissue distribution, present at highest levels in testis, where it is enriched in spermatogonia and pachytene cells (at protein level).

The protein localises to the nucleus. The enzyme catalyses N(6),N(6),N(6)-trimethyl-L-lysyl(4)-[histone H3] + 3 2-oxoglutarate + 3 O2 = L-lysyl(4)-[histone H3] + 3 formaldehyde + 3 succinate + 3 CO2. Histone demethylase that demethylates 'Lys-4' of histone H3, thereby playing a central role in histone code. Does not demethylate histone H3 'Lys-9' or H3 'Lys-27'. Demethylates trimethylated, dimethylated and monomethylated H3 'Lys-4'. Acts as a transcriptional corepressor for FOXG1B and PAX9. Represses the CLOCK-BMAL1 heterodimer-mediated transcriptional activation of the core clock component PER2. This chain is Lysine-specific demethylase 5B (Kdm5b), found in Mus musculus (Mouse).